The chain runs to 674 residues: uncharacterized protein (674 aa).

Positions 1–24 (MKTLKALKIFIIVYISSVSLESFA) are cleaved as a signal peptide. 2 consecutive transmembrane segments (helical) span residues 226-246 (IIGA…ALNK) and 254-274 (ITLF…LEPL). Residues 363–384 (GNGPGGNNKPIPNFDPDSKKDR) form a disordered region. The next 4 helical transmembrane spans lie at 409–429 (IIIL…LLYF), 436–456 (CMIT…MVLF), 469–489 (VCIS…LLIT), and 562–582 (VVSI…FYYF). The segment at 624-674 (SSVHAQGKSPVEDKPDIGSKRKDGVQQGEDSENSSGGELADLASGSGGGKL) is disordered. Residues 633–647 (PVEDKPDIGSKRKDG) show a composition bias toward basic and acidic residues.

It belongs to the TrbL/VirB6 family.

The protein localises to the cell membrane. This is an uncharacterized protein from Rickettsia typhi (strain ATCC VR-144 / Wilmington).